The primary structure comprises 202 residues: Outer-membrane lipoprotein LolB (202 aa).

The signal sequence occupies residues 1-18; it reads MFRRTYFWLMLLPLFMVG. The N-palmitoyl cysteine moiety is linked to residue cysteine 19. Cysteine 19 is lipidated: S-diacylglycerol cysteine.

Belongs to the LolB family. In terms of assembly, monomer.

The protein localises to the cell outer membrane. Functionally, plays a critical role in the incorporation of lipoproteins in the outer membrane after they are released by the LolA protein. The chain is Outer-membrane lipoprotein LolB from Vibrio vulnificus (strain YJ016).